Consider the following 713-residue polypeptide: Pheromone-processing carboxypeptidase KEX1 (713 aa).

The first 22 residues, 1-22, serve as a signal peptide directing secretion; sequence MMVSYKLLSLITLLFVAQCTTG. At 23-616 the chain is on the lumenal side; that stretch reads LLKQDDYVVR…ESETKTHPKA (594 aa). Active-site residues include S196 and D404. 2 N-linked (GlcNAc...) asparagine glycosylation sites follow: N457 and N465. H468 is an active-site residue. The disordered stretch occupies residues 500-612; it reads DVLISTNEPT…DDKSESETKT (113 aa). Positions 512–522 are enriched in acidic residues; sequence DIEEEELDGEK. Residues 523–552 show a composition bias toward basic and acidic residues; that stretch reads EDEKDGVTEGDGEKSDTDEGKDTDKGKDEK. Positions 553 to 601 are enriched in acidic residues; sequence NDDDDDDDDDSDDDSDDDDDDDDDDDDDDDDDDDSDDDDDDDDDSDDNE. A compositionally biased stretch (basic and acidic residues) spans 602–612; it reads KDDKSESETKT. A helical transmembrane segment spans residues 617-637; the sequence is KIALLLLLFISVFGITGSQAL. Residues 638-713 are Cytoplasmic-facing; that stretch reads RQRNFQFRRA…IDESFELAEI (76 aa). The disordered stretch occupies residues 650–696; the sequence is TSNSFSSSSSPNDPSNWDSNDDFDFDIENDPLPSTNNKHKAAKKKKD. Residues 651–667 show a composition bias toward low complexity; the sequence is SNSFSSSSSPNDPSNWD. Over residues 668–678 the composition is skewed to acidic residues; sequence SNDDFDFDIEN. A compositionally biased stretch (basic residues) spans 686 to 695; that stretch reads NKHKAAKKKK.

It belongs to the peptidase S10 family.

The protein localises to the golgi apparatus. Its subcellular location is the trans-Golgi network membrane. The enzyme catalyses Preferential release of a C-terminal arginine or lysine residue.. In terms of biological role, protease with a carboxypeptidase B-like function involved in the C-terminal processing of the lysine and arginine residues from protein precursors. Promotes cell fusion and is involved in the programmed cell death. The sequence is that of Pheromone-processing carboxypeptidase KEX1 (KEX1) from Vanderwaltozyma polyspora (strain ATCC 22028 / DSM 70294 / BCRC 21397 / CBS 2163 / NBRC 10782 / NRRL Y-8283 / UCD 57-17) (Kluyveromyces polysporus).